The following is a 334-amino-acid chain: Phosphate acyltransferase (334 aa).

This sequence belongs to the PlsX family. Homodimer. Probably interacts with PlsY.

The protein localises to the cytoplasm. It catalyses the reaction a fatty acyl-[ACP] + phosphate = an acyl phosphate + holo-[ACP]. It participates in lipid metabolism; phospholipid metabolism. Functionally, catalyzes the reversible formation of acyl-phosphate (acyl-PO(4)) from acyl-[acyl-carrier-protein] (acyl-ACP). This enzyme utilizes acyl-ACP as fatty acyl donor, but not acyl-CoA. The polypeptide is Phosphate acyltransferase (Acholeplasma laidlawii (strain PG-8A)).